Here is a 220-residue protein sequence, read N- to C-terminus: Glycerol-3-phosphate acyltransferase (220 aa).

6 consecutive transmembrane segments (helical) span residues 11-31 (INVIFTLLGYLIGGIPFGYAL), 70-90 (LLVLILDLFKGMFAVFLSKLF), 96-116 (LQWMVAIASILGHCYSPFLNF), 127-147 (GSVVLLIPIESLIGLTVWFFV), 153-173 (ISSLASILGVGTATVLIFFVP), and 193-213 (MVLIFIFTLIKHAGNIFNLLA).

Belongs to the PlsY family. As to quaternary structure, probably interacts with PlsX.

The protein resides in the cell inner membrane. It carries out the reaction an acyl phosphate + sn-glycerol 3-phosphate = a 1-acyl-sn-glycero-3-phosphate + phosphate. It functions in the pathway lipid metabolism; phospholipid metabolism. In terms of biological role, catalyzes the transfer of an acyl group from acyl-phosphate (acyl-PO(4)) to glycerol-3-phosphate (G3P) to form lysophosphatidic acid (LPA). This enzyme utilizes acyl-phosphate as fatty acyl donor, but not acyl-CoA or acyl-ACP. The polypeptide is Glycerol-3-phosphate acyltransferase (Helicobacter pylori (strain HPAG1)).